The primary structure comprises 202 residues: Small ribosomal subunit protein uS4c (202 aa).

The 61-residue stretch at 90–150 (MRLDNVIFRL…NQRKSQAIIN (61 aa)) folds into the S4 RNA-binding domain.

This sequence belongs to the universal ribosomal protein uS4 family. In terms of assembly, part of the 30S ribosomal subunit. Contacts protein S5. The interaction surface between S4 and S5 is involved in control of translational fidelity.

It is found in the plastid. Its subcellular location is the chloroplast. In terms of biological role, one of the primary rRNA binding proteins, it binds directly to 16S rRNA where it nucleates assembly of the body of the 30S subunit. Its function is as follows. With S5 and S12 plays an important role in translational accuracy. The sequence is that of Small ribosomal subunit protein uS4c (rps4) from Canalohypopterygium tamariscinum (Moss).